Here is a 71-residue protein sequence, read N- to C-terminus: Small ribosomal subunit protein bS21 (71 aa).

Residues 47–71 (RENATRAKRHAKRVARENARNTRLY) form a disordered region. The span at 60 to 71 (VARENARNTRLY) shows a compositional bias: basic and acidic residues.

Belongs to the bacterial ribosomal protein bS21 family.

The sequence is that of Small ribosomal subunit protein bS21 from Actinobacillus succinogenes (strain ATCC 55618 / DSM 22257 / CCUG 43843 / 130Z).